Here is a 345-residue protein sequence, read N- to C-terminus: Fe(3+) ions import ATP-binding protein FbpC (345 aa).

In terms of domain architecture, ABC transporter spans 3 to 233; the sequence is LSLKAATVRF…PADEFVARFL (231 aa). An ATP-binding site is contributed by 35 to 42; sequence GPSGSGKS.

This sequence belongs to the ABC transporter superfamily. Fe(3+) ion importer (TC 3.A.1.10) family. As to quaternary structure, the complex is composed of two ATP-binding proteins (FbpC), two transmembrane proteins (FbpB) and a solute-binding protein (FbpA).

It is found in the cell membrane. It carries out the reaction Fe(3+)(out) + ATP + H2O = Fe(3+)(in) + ADP + phosphate + H(+). Functionally, part of the ABC transporter complex FbpABC involved in Fe(3+) ions import. Responsible for energy coupling to the transport system. The polypeptide is Fe(3+) ions import ATP-binding protein FbpC (Streptomyces avermitilis (strain ATCC 31267 / DSM 46492 / JCM 5070 / NBRC 14893 / NCIMB 12804 / NRRL 8165 / MA-4680)).